Reading from the N-terminus, the 497-residue chain is Probable malate:quinone oxidoreductase (497 aa).

It belongs to the MQO family. Requires FAD as cofactor.

The catalysed reaction is (S)-malate + a quinone = a quinol + oxaloacetate. It participates in carbohydrate metabolism; tricarboxylic acid cycle; oxaloacetate from (S)-malate (quinone route): step 1/1. The sequence is that of Probable malate:quinone oxidoreductase from Hahella chejuensis (strain KCTC 2396).